The chain runs to 1140 residues: MTTELTNVSLEEAITEKTSENRRKRDSDVLQTEEVDLSNVKRIRASRNQDNRPERQSRLQRSSSLIEQVRGNEDGENDVLNQTRETNSNFDNRVGVIECIHLVNFMCHDSLKINFGPRINFVIGHNGSGKSAILTGLTICLGAKASNTNRAPNMKSLVKQGKNYARISVTISNRGFEAYQPEIYGKSITIERTIRREGSSEYRLRSFNGTVISTKRDELDNICDHMGLQIDNPMNILTQDTARQFLGNSSPKEKYQLFMKGIQLKQLEENYSLIEQSLINTKNVLGNKKTGVSYLAKKEEEYKLLWEQSRETENLHNLLEQKKGEMVWAQVVEVEKELLLAEKEFQHAEVKLSEAKENLESIVTNQSDIDGKISSKEEVIGRAKGETDTTKSKFEDIVKTFDGYRSEMNDVDIQKRDIQNSINAAKSCLDVYREQLNTERARENNLGGSQIEKRANESNNLQREIADLSEQIVELESKRNDLHSALLEMGGNLTSLLTKKDSIANKISDQSEHLKVLEDVQRDKVSAFGKNMPQLLKLITRETRFQHPPKGPMGKYMTVKEQKWHLIIERILGNVINGFIVRSHHDQLILKELMRQSNCHATVVVGKYDPFDYSSGEPDSQYPTVLKIIKFDDDEVLHTLINHLGIEKMLLIEDRREAEAYMKRGIANVTQCYALDPRNRGYGFRIVSTQRSSGISKVTPWNRPPRIGFSSSTSIEAEKKILDDLKKQYNFASNQLNEAKIEQAKFKRDEQLLVEKIEGIKKRILLKRREVNSLESQELSVLDTEKIQTLERRISETEKELESYAGQLQDAKNEEHRIRDNQRPVIEEIRIYREKIQTETQRLSSLQTELSRLRDEKRNSEVDIERHRQTVESCTNILREKEAKKVQCAQVVADYTAKANTRCERVPVQLSPAELDNEIERLQMQIAEWRNRTGVSVEQAAEDYLNAKEKHDQAKVLVARLTQLLQALEETLRRRNEMWTKFRKLITLRTKELFELYLSQRNFTGKLVIKHQEEFLEPRVYPANRNLATAHNRHEKSKVSVQGLSGGEKSFATICMLLSIWEAMSCPLRCLDEFDVFMDAVNRLVSIKMMVDSAKDSSDKQFIFITPQDMGQIGLDKDVVVFRLSDPVVSSSALPPSTAP.

The interval Met1 to Ser63 is disordered. Basic and acidic residues predominate over residues Ile14–Asp28. 2 short sequence motifs (nuclear localization signal) span residues Arg22–Arg25 and Lys41–Arg44. Positions Arg47–Ser57 are enriched in basic and acidic residues. Gly124–Ser131 provides a ligand contact to ATP. Coiled coils occupy residues Ile262 to Thr290, Ala329 to Ile369, and Gly448 to Leu493. A flexible hinge region spans residues Thr494–Ser710. 2 coiled-coil regions span residues Ser711 to Met978 and Ile1113 to Pro1140.

Belongs to the SMC family. SMC6 subfamily. As to quaternary structure, two subcomplexes smc5-smc6-nse2 and nse1-nse3-nse4 exist. These subcomplexes are then brought together via a number of interactions, forming the Smc5-Smc6 complex. In terms of processing, sumoylated by nse2.

It localises to the nucleus. It is found in the chromosome. In terms of biological role, acts in a DNA repair pathway for removal of UV-induced DNA damage that is distinct from classical nucleotide excision repair and in repair of ionizing radiation damage. Functions in homologous recombination repair of DNA double strand breaks and in recovery of stalled replication forks. Plays a critical role in meiosis. The polypeptide is Structural maintenance of chromosomes protein 6 (smc6) (Schizosaccharomyces pombe (strain 972 / ATCC 24843) (Fission yeast)).